Reading from the N-terminus, the 215-residue chain is MOB kinase activator-like 1A (215 aa).

Residues 1-27 form a disordered region; the sequence is MSLFGLGRNQKTFRPKKSAPSGSKGAQ. Zn(2+) contacts are provided by C79, C84, H161, and H166.

The protein belongs to the MOB1/phocein family. Interacts with SIK1 at the plasma membrane and in the nucleus. As to expression, constitutively expressed. In 3- to 4-day-old seedlings, expression is high in the shoot apical meristem and along the vasculature in cotyledons, hypocotyls and roots. At the root tip, expression is detected in columella and lateral root cap cells as well as in the stem cell niche around the quiescent center (QC). The levels of expression decrease progressively in the meristematic zone from the root tip towards the base of the root, becoming stronger again in the elongation zone. In flowers, expression appears localized in ovules and pollen.

It localises to the nucleus. The protein localises to the cell membrane. The protein resides in the vacuole membrane. Plays a key role in regulation of cell expansion and cell division. Required for proper plant development, the correct patterning of the root meristem and the control of root growth. Involved in both sporogenesis and gametogenesis. The sequence is that of MOB kinase activator-like 1A from Arabidopsis thaliana (Mouse-ear cress).